The sequence spans 171 residues: Co-chaperone protein HscB homolog (171 aa).

The 73-residue stretch at 2 to 74 folds into the J domain; it reads NYFELFGLPI…LRRAEYLLSL (73 aa).

It belongs to the HscB family. As to quaternary structure, interacts with HscA and stimulates its ATPase activity.

Its function is as follows. Co-chaperone involved in the maturation of iron-sulfur cluster-containing proteins. Seems to help targeting proteins to be folded toward HscA. The chain is Co-chaperone protein HscB homolog from Vibrio cholerae serotype O1 (strain ATCC 39541 / Classical Ogawa 395 / O395).